We begin with the raw amino-acid sequence, 204 residues long: Thymidylate kinase (204 aa).

Residue 12-19 (GVDGAGKS) coordinates ATP.

This sequence belongs to the thymidylate kinase family.

The enzyme catalyses dTMP + ATP = dTDP + ADP. Its function is as follows. Phosphorylation of dTMP to form dTDP in both de novo and salvage pathways of dTTP synthesis. The chain is Thymidylate kinase from Thiobacillus denitrificans (strain ATCC 25259 / T1).